Here is a 95-residue protein sequence, read N- to C-terminus: Aspartyl/glutamyl-tRNA(Asn/Gln) amidotransferase subunit C (95 aa).

The protein belongs to the GatC family. Heterotrimer of A, B and C subunits.

The catalysed reaction is L-glutamyl-tRNA(Gln) + L-glutamine + ATP + H2O = L-glutaminyl-tRNA(Gln) + L-glutamate + ADP + phosphate + H(+). It catalyses the reaction L-aspartyl-tRNA(Asn) + L-glutamine + ATP + H2O = L-asparaginyl-tRNA(Asn) + L-glutamate + ADP + phosphate + 2 H(+). In terms of biological role, allows the formation of correctly charged Asn-tRNA(Asn) or Gln-tRNA(Gln) through the transamidation of misacylated Asp-tRNA(Asn) or Glu-tRNA(Gln) in organisms which lack either or both of asparaginyl-tRNA or glutaminyl-tRNA synthetases. The reaction takes place in the presence of glutamine and ATP through an activated phospho-Asp-tRNA(Asn) or phospho-Glu-tRNA(Gln). In Geobacter sp. (strain M21), this protein is Aspartyl/glutamyl-tRNA(Asn/Gln) amidotransferase subunit C.